A 416-amino-acid polypeptide reads, in one-letter code: GTPase ERA1, chloroplastic (416 aa).

The N-terminal 53 residues, 1 to 53, are a transit peptide targeting the chloroplast; sequence MELGLALRLVAPPPLLPCLSRRALSLPPDFVSSRVLRGRRIHASRLKHGAGVV. Residues 117–287 form the Era-type G domain; the sequence is RSGYVAVLGK…KEWILSKLPL (171 aa). The interval 125–132 is G1; it reads GKPNVGKS. 125 to 132 contacts GTP; that stretch reads GKPNVGKS. The G2 stretch occupies residues 151 to 155; it reads QTTRH. The interval 172–175 is G3; sequence DTPG. Residues 172 to 176 and 237 to 240 each bind GTP; these read DTPGV and NKKD. The segment at 237–240 is G4; sequence NKKD. The G5 stretch occupies residues 266–268; sequence ISA. Residues 318 to 395 form the KH type-2 domain; the sequence is YRQEIPYSCQ…YLEVEVKVKE (78 aa).

The protein belongs to the TRAFAC class TrmE-Era-EngA-EngB-Septin-like GTPase superfamily. Era GTPase family.

The protein localises to the plastid. The protein resides in the chloroplast stroma. It localises to the chloroplast nucleoid. Its function is as follows. Nuclear genome-encoded probable GTPase involved in ribosome biogenesis in chloroplasts. Plays a role in 16S rRNA maturation in plastids and may contribute to the assembly of the small (30S) ribosomal subunit. The chain is GTPase ERA1, chloroplastic from Zea mays (Maize).